A 404-amino-acid chain; its full sequence is Multidrug resistance protein MdtG (404 aa).

11 helical membrane-spanning segments follow: residues 19-39 (LGCF…PLYV), 56-76 (LVFS…GGLA), 90-110 (LGMA…QFLI), 113-133 (ALLG…ATQV), 144-164 (TLST…GLLA), 171-191 (PVFF…FFFI), 222-242 (LFVT…ILTL), 254-274 (IAFI…LSAP), 288-308 (ILIV…FVQT), 317-337 (FLLG…LVYN), and 376-396 (AVFC…WNSL).

Belongs to the major facilitator superfamily. DHA1 family. MdtG (TC 2.A.1.2.20) subfamily.

The protein localises to the cell inner membrane. In Salmonella dublin (strain CT_02021853), this protein is Multidrug resistance protein MdtG.